Consider the following 56-residue polypeptide: Small ribosomal subunit protein uS14 (56 aa).

Zn(2+)-binding residues include Cys-21, Cys-24, Cys-39, and Cys-42.

This sequence belongs to the universal ribosomal protein uS14 family. The cofactor is Zn(2+).

In Triticum aestivum (Wheat), this protein is Small ribosomal subunit protein uS14 (RPS29).